A 413-amino-acid polypeptide reads, in one-letter code: 3-hydroxy-3-methylglutaryl-coenzyme A reductase (413 aa).

Active-site charge relay system residues include E106 and D312. The active-site Proton donor is the H408.

This sequence belongs to the HMG-CoA reductase family.

The enzyme catalyses (R)-mevalonate + 2 NADP(+) + CoA = (3S)-3-hydroxy-3-methylglutaryl-CoA + 2 NADPH + 2 H(+). It participates in metabolic intermediate biosynthesis; (R)-mevalonate biosynthesis; (R)-mevalonate from acetyl-CoA: step 3/3. Its function is as follows. Converts HMG-CoA to mevalonate. The chain is 3-hydroxy-3-methylglutaryl-coenzyme A reductase (hmgA) from Pyrococcus horikoshii (strain ATCC 700860 / DSM 12428 / JCM 9974 / NBRC 100139 / OT-3).